The primary structure comprises 169 residues: CKLF-like MARVEL transmembrane domain-containing protein 1 (169 aa).

An MARVEL domain is found at 17–135 (NLKQPETAAA…DAFVVTTKMR (119 aa)). Helical transmembrane passes span 22–42 (ETAA…ITQA), 46–66 (FITI…IYVL), 79–99 (LLDL…AILA), and 110–130 (YVGG…AFVV).

It belongs to the chemokine-like factor family. As to expression, highly expressed in testis.

It is found in the membrane. The sequence is that of CKLF-like MARVEL transmembrane domain-containing protein 1 (CMTM1) from Homo sapiens (Human).